Here is a 380-residue protein sequence, read N- to C-terminus: Actin-like protein arp10 (380 aa).

It belongs to the actin family. ARP10 subfamily.

It localises to the cytoplasm. It is found in the cytoskeleton. The protein resides in the nucleus. This Schizosaccharomyces pombe (strain 972 / ATCC 24843) (Fission yeast) protein is Actin-like protein arp10 (arp10).